We begin with the raw amino-acid sequence, 353 residues long: MFYWLYRHLEINILQYISVRAGISFFIAFVLTMYLMPKFIRWARAKKASQPIYELAPENHKIKAGTPTMGGVVFIFSTIIATVLTAKLNNFYIVGGILTLALFSLIGIQDDYSKISKEKNSAGLTPRMKLIFQFLCAASIAGILFLYGHSTELFTPFYKFPLFEMGVFGIVFWMFVIVGSSNAVNLTDGLDGLATVPSILAFSTLSILVYVVGHAVFANYLLFPNIQIAGELAIMGSAICGALIAFLWFNSHPAEVFMGDSGSLPLGAFMGYLAIVAKSEILLLAIGFIFVWETVSVILQVGSYKLRQKRVFLMAPIHHHFEQKGWKENKIIVRFWIIAFMSNLIALLSLKIR.

The next 10 membrane-spanning stretches (helical) occupy residues Tyr16–Met36, Ala64–Leu84, Leu88–Ile108, Leu130–Ser150, Phe160–Ser180, Ser198–Ala218, Ile228–Trp248, Val256–Val276, Ile281–Val301, and Lys330–Leu350.

Belongs to the glycosyltransferase 4 family. MraY subfamily. The cofactor is Mg(2+).

The protein localises to the cell inner membrane. The enzyme catalyses UDP-N-acetyl-alpha-D-muramoyl-L-alanyl-gamma-D-glutamyl-meso-2,6-diaminopimeloyl-D-alanyl-D-alanine + di-trans,octa-cis-undecaprenyl phosphate = di-trans,octa-cis-undecaprenyl diphospho-N-acetyl-alpha-D-muramoyl-L-alanyl-D-glutamyl-meso-2,6-diaminopimeloyl-D-alanyl-D-alanine + UMP. The protein operates within cell wall biogenesis; peptidoglycan biosynthesis. Functionally, catalyzes the initial step of the lipid cycle reactions in the biosynthesis of the cell wall peptidoglycan: transfers peptidoglycan precursor phospho-MurNAc-pentapeptide from UDP-MurNAc-pentapeptide onto the lipid carrier undecaprenyl phosphate, yielding undecaprenyl-pyrophosphoryl-MurNAc-pentapeptide, known as lipid I. The polypeptide is Phospho-N-acetylmuramoyl-pentapeptide-transferase (Aliarcobacter butzleri (strain RM4018) (Arcobacter butzleri)).